Reading from the N-terminus, the 112-residue chain is Integration host factor subunit alpha (112 aa).

Belongs to the bacterial histone-like protein family. As to quaternary structure, heterodimer of an alpha and a beta chain.

Its function is as follows. This protein is one of the two subunits of integration host factor, a specific DNA-binding protein that functions in genetic recombination as well as in transcriptional and translational control. The polypeptide is Integration host factor subunit alpha (Rhizobium leguminosarum bv. trifolii (strain WSM2304)).